A 975-amino-acid chain; its full sequence is Synaptopodin 2-like protein (975 aa).

Residues 6–85 (EVQVTLAGGA…QLVLTVRRVT (80 aa)) form the PDZ domain. 3 disordered regions span residues 18 to 41 (GFRLQGGTEQRKPLQIRRRSQAGR), 86 to 214 (DEGS…PAEA), and 314 to 349 (AGTGTEEEDGIPPTSESELDEETFSDARSLTNQSDW). S105 and S108 each carry phosphoserine. T138 carries the phosphothreonine modification. Phosphoserine occurs at positions 140, 163, 175, and 177. Positions 187–200 (GSPSQGDSRVSSPS) are enriched in polar residues. The segment covering 202 to 214 (EEGAALQPPPAEA) has biased composition (low complexity). The span at 339–349 (DARSLTNQSDW) shows a compositional bias: polar residues. Residues S342, S347, S371, S378, and S381 each carry the phosphoserine modification. An omega-N-methylarginine mark is found at R383, R463, R466, and R476. The interval 491-649 (KVNEGLGSTS…ETKNSPNPEL (159 aa)) is disordered. Residues 502–516 (APSPFAAPPQGPTPL) are compositionally biased toward pro residues. Positions 519–528 (FTTVVPSHTP) are enriched in polar residues. Low complexity-rich tracts occupy residues 530-540 (SGASSSTQRSS) and 571-580 (SAAAMTSTAS). Phosphoserine occurs at positions 667 and 675. Positions 687–731 (LGGRSYKTLPQVSPKTPPPMAPKTPPPTTPKTPPPVAPKPGSRGL) are disordered. The span at 701–724 (KTPPPMAPKTPPPTTPKTPPPVAP) shows a compositional bias: pro residues. Phosphothreonine is present on residues T702 and T710. R754 carries the omega-N-methylarginine modification. The disordered stretch occupies residues 772 to 797 (EATSGSSLNPGLRPRSPSPTPSLPPS). A phosphoserine mark is found at S787 and S789. A Phosphothreonine modification is found at T791. Omega-N-methylarginine is present on residues R805, R825, and R888. Residue S890 is modified to Phosphoserine. 2 positions are modified to phosphothreonine: T891 and T897. R909 is subject to Omega-N-methylarginine. R920 is subject to Asymmetric dimethylarginine; alternate. The residue at position 920 (R920) is an Omega-N-methylarginine; alternate. Omega-N-methylarginine occurs at positions 953 and 955.

Belongs to the synaptopodin family.

The protein localises to the cytoplasm. The protein resides in the cytoskeleton. Functionally, actin-associated protein that may play a role in modulating actin-based shape. The polypeptide is Synaptopodin 2-like protein (Synpo2l) (Mus musculus (Mouse)).